The following is a 137-amino-acid chain: Small ribosomal subunit protein uS12 (137 aa).

This sequence belongs to the universal ribosomal protein uS12 family. Part of the 30S ribosomal subunit. Contacts proteins S8 and S17. May interact with IF1 in the 30S initiation complex.

With S4 and S5 plays an important role in translational accuracy. Functionally, interacts with and stabilizes bases of the 16S rRNA that are involved in tRNA selection in the A site and with the mRNA backbone. Located at the interface of the 30S and 50S subunits, it traverses the body of the 30S subunit contacting proteins on the other side and probably holding the rRNA structure together. The combined cluster of proteins S8, S12 and S17 appears to hold together the shoulder and platform of the 30S subunit. This is Small ribosomal subunit protein uS12 from Lactiplantibacillus plantarum (strain ATCC BAA-793 / NCIMB 8826 / WCFS1) (Lactobacillus plantarum).